A 368-amino-acid polypeptide reads, in one-letter code: 1-deoxy-D-xylulose 5-phosphate reductoisomerase (368 aa).

NADPH contacts are provided by Thr-7, Gly-8, Ser-9, Ile-10, Gly-31, Lys-32, Asn-33, and Asn-113. Lys-114 serves as a coordination point for 1-deoxy-D-xylulose 5-phosphate. NADPH is bound at residue Glu-115. Asp-133 is a Mn(2+) binding site. 1-deoxy-D-xylulose 5-phosphate is bound by residues Ser-134, Glu-135, Ser-158, and His-181. Glu-135 is a binding site for Mn(2+). Residue Gly-187 participates in NADPH binding. 1-deoxy-D-xylulose 5-phosphate contacts are provided by Ser-194, Asn-199, Lys-200, and Glu-203. Glu-203 contacts Mn(2+).

This sequence belongs to the DXR family. Mg(2+) serves as cofactor. The cofactor is Mn(2+).

The catalysed reaction is 2-C-methyl-D-erythritol 4-phosphate + NADP(+) = 1-deoxy-D-xylulose 5-phosphate + NADPH + H(+). It functions in the pathway isoprenoid biosynthesis; isopentenyl diphosphate biosynthesis via DXP pathway; isopentenyl diphosphate from 1-deoxy-D-xylulose 5-phosphate: step 1/6. Its function is as follows. Catalyzes the NADPH-dependent rearrangement and reduction of 1-deoxy-D-xylulose-5-phosphate (DXP) to 2-C-methyl-D-erythritol 4-phosphate (MEP). The sequence is that of 1-deoxy-D-xylulose 5-phosphate reductoisomerase from Helicobacter pylori (strain HPAG1).